Here is a 196-residue protein sequence, read N- to C-terminus: MPNMSSNIPRMQQRYDESVRAALTETYGYKNVHQVPRLLKISMNMGVGAAVGDKKVLDLAIDSMTQITGQKPVTTIARKSIAGFRLREGMPIGCMVTMRRQRMYEFLDRLVSIVLPRVRDFRGISRKAFDGNGNYTLGLNEQLVFPELNPDKFVRPQGMNISFVTSAKTDDEAREMLRLFGMPFKQPKEKEQAGAA.

This sequence belongs to the universal ribosomal protein uL5 family. As to quaternary structure, part of the 50S ribosomal subunit; part of the 5S rRNA/L5/L18/L25 subcomplex. Contacts the 5S rRNA and the P site tRNA. Forms a bridge to the 30S subunit in the 70S ribosome.

In terms of biological role, this is one of the proteins that bind and probably mediate the attachment of the 5S RNA into the large ribosomal subunit, where it forms part of the central protuberance. In the 70S ribosome it contacts protein S13 of the 30S subunit (bridge B1b), connecting the 2 subunits; this bridge is implicated in subunit movement. Contacts the P site tRNA; the 5S rRNA and some of its associated proteins might help stabilize positioning of ribosome-bound tRNAs. The chain is Large ribosomal subunit protein uL5 from Rhodopirellula baltica (strain DSM 10527 / NCIMB 13988 / SH1).